A 208-amino-acid polypeptide reads, in one-letter code: Small ribosomal subunit protein uS4 (208 aa).

Residues 98-160 (RRLDNVVYRM…SKNNVQIQRA (63 aa)) form the S4 RNA-binding domain.

This sequence belongs to the universal ribosomal protein uS4 family. As to quaternary structure, part of the 30S ribosomal subunit. Contacts protein S5. The interaction surface between S4 and S5 is involved in control of translational fidelity.

One of the primary rRNA binding proteins, it binds directly to 16S rRNA where it nucleates assembly of the body of the 30S subunit. In terms of biological role, with S5 and S12 plays an important role in translational accuracy. This Nautilia profundicola (strain ATCC BAA-1463 / DSM 18972 / AmH) protein is Small ribosomal subunit protein uS4.